The sequence spans 120 residues: Large ribosomal subunit protein bL12 (120 aa).

Belongs to the bacterial ribosomal protein bL12 family. As to quaternary structure, homodimer. Part of the ribosomal stalk of the 50S ribosomal subunit. Forms a multimeric L10(L12)X complex, where L10 forms an elongated spine to which 2 to 4 L12 dimers bind in a sequential fashion. Binds GTP-bound translation factors.

Its function is as follows. Forms part of the ribosomal stalk which helps the ribosome interact with GTP-bound translation factors. Is thus essential for accurate translation. This Clostridium botulinum (strain Alaska E43 / Type E3) protein is Large ribosomal subunit protein bL12.